Here is an 807-residue protein sequence, read N- to C-terminus: Protein WEAK CHLOROPLAST MOVEMENT UNDER BLUE LIGHT 1 (807 aa).

Residues 1–162 (MEDLKTVEAS…GTPKNVDSHR (162 aa)) form a disordered region. Polar residues predominate over residues 31 to 40 (RESNIQSATK). Positions 46–73 (QSQTDTEETQQSQTDTEETQQSQTDDTT) are enriched in low complexity. Residues 138–157 (RTVSSPRFSGSPVSTGTPKN) show a composition bias toward polar residues. Ser148 is subject to Phosphoserine. Coiled coils occupy residues 191-429 (RMQA…ELVA), 457-489 (DLHA…LKLA), 516-621 (IAVA…ALEE), and 664-724 (AAVS…WRAE). Disordered stretches follow at residues 532–565 (IASV…EAKS) and 722–789 (RAEH…KKKK). Basic and acidic residues-rich tracts occupy residues 537 to 548 (SKEKDAREKMVE), 722 to 732 (RAEHEQKRKAG), and 739 to 749 (KNLKESFEGGK). Over residues 761 to 781 (SSPSESYGTEENSETNLSPQT) the composition is skewed to polar residues.

The protein belongs to the WEB family. Interacts with PMI2. As to expression, ubiquitous but preferentially in chloroplast-containing tissues.

It localises to the cytoplasm. Required for the chloroplast avoidance response under high intensity blue light. This avoidance response consists in the relocation of chloroplasts on the anticlinal side of exposed cells. Acts in association with PMI2 to maintain the velocity of chloroplast photorelocation movement via cp-actin filaments regulation. In Arabidopsis thaliana (Mouse-ear cress), this protein is Protein WEAK CHLOROPLAST MOVEMENT UNDER BLUE LIGHT 1 (WEB1).